The primary structure comprises 59 residues: Embryonic testis differentiation protein homolog C (59 aa).

Positions 1-22 are disordered; that stretch reads MDKELPKASPSEPALNIKKSGK.

The polypeptide is Embryonic testis differentiation protein homolog C (Homo sapiens (Human)).